A 143-amino-acid polypeptide reads, in one-letter code: MHTYKFIQIALLFASVALAIPTPPSPPNPPPVPQLPNSETKSNRLVSHSCEFCGVVKPSGPAYLEHYHQNHREEVWGKLATPSPPNPPPVPTQKVETHAPKTHGCEWCNKVEPSGPAYIKHYKENHEDQVWGKWAGQDAKASP.

The first 19 residues, 1-19 (MHTYKFIQIALLFASVALA), serve as a signal peptide directing secretion. Over residues 24-34 (PSPPNPPPVPQ) the composition is skewed to pro residues. A disordered region spans residues 24 to 43 (PSPPNPPPVPQLPNSETKSN). A C2H2-type 1 zinc finger spans residues 48–71 (HSCEFCGVVKPSGPAYLEHYHQNH). The tract at residues 77 to 99 (GKLATPSPPNPPPVPTQKVETHA) is disordered. Pro residues predominate over residues 82 to 91 (PSPPNPPPVP). The segment at 103-126 (HGCEWCNKVEPSGPAYIKHYKENH) adopts a C2H2-type 2 zinc-finger fold.

Its subcellular location is the secreted. The protein resides in the host nucleus. Probable secreted effector that translocates into the nuclei of host cells to reprogram the expression of targeted genes by binding on effector binding elements in rice. In Pyricularia oryzae (strain 70-15 / ATCC MYA-4617 / FGSC 8958) (Rice blast fungus), this protein is Host transcription reprogramming factor 8.